A 187-amino-acid polypeptide reads, in one-letter code: Probable nicotinate-nucleotide adenylyltransferase (187 aa).

The protein belongs to the NadD family.

It carries out the reaction nicotinate beta-D-ribonucleotide + ATP + H(+) = deamido-NAD(+) + diphosphate. Its pathway is cofactor biosynthesis; NAD(+) biosynthesis; deamido-NAD(+) from nicotinate D-ribonucleotide: step 1/1. In terms of biological role, catalyzes the reversible adenylation of nicotinate mononucleotide (NaMN) to nicotinic acid adenine dinucleotide (NaAD). The sequence is that of Probable nicotinate-nucleotide adenylyltransferase from Anaeromyxobacter sp. (strain K).